A 379-amino-acid polypeptide reads, in one-letter code: Cytochrome b (379 aa).

4 consecutive transmembrane segments (helical) span residues 33–53 (FGSL…FLAM), 77–98 (WLIR…FIHV), 113–133 (WNIG…GYVL), and 178–198 (FFAF…VHLL). Positions 83 and 97 each coordinate heme b. The heme b site is built by His182 and His196. His201 serves as a coordination point for a ubiquinone. 4 consecutive transmembrane segments (helical) span residues 226–246 (TKDL…ALFF), 288–308 (LGGV…PLLN), 320–340 (VTQV…WIGG), and 347–367 (FTTI…ILIP).

It belongs to the cytochrome b family. As to quaternary structure, the cytochrome bc1 complex contains 11 subunits: 3 respiratory subunits (MT-CYB, CYC1 and UQCRFS1), 2 core proteins (UQCRC1 and UQCRC2) and 6 low-molecular weight proteins (UQCRH/QCR6, UQCRB/QCR7, UQCRQ/QCR8, UQCR10/QCR9, UQCR11/QCR10 and a cleavage product of UQCRFS1). This cytochrome bc1 complex then forms a dimer. The cofactor is heme b.

The protein localises to the mitochondrion inner membrane. Component of the ubiquinol-cytochrome c reductase complex (complex III or cytochrome b-c1 complex) that is part of the mitochondrial respiratory chain. The b-c1 complex mediates electron transfer from ubiquinol to cytochrome c. Contributes to the generation of a proton gradient across the mitochondrial membrane that is then used for ATP synthesis. The chain is Cytochrome b (MT-CYB) from Akodon paranaensis (Parana grass mouse).